Here is a 123-residue protein sequence, read N- to C-terminus: Fluoride-specific ion channel FluC 1 (123 aa).

The next 3 helical transmembrane spans lie at 33–53, 59–79, and 98–118; these read TFLI…LFGV, YGTM…TTFS, and VFYL…GAML. Na(+)-binding residues include Gly-73 and Thr-76.

This sequence belongs to the fluoride channel Fluc/FEX (TC 1.A.43) family.

The protein resides in the cell inner membrane. The enzyme catalyses fluoride(in) = fluoride(out). Na(+) is not transported, but it plays an essential structural role and its presence is essential for fluoride channel function. Fluoride-specific ion channel. Important for reducing fluoride concentration in the cell, thus reducing its toxicity. This is Fluoride-specific ion channel FluC 1 from Brucella melitensis biotype 1 (strain ATCC 23456 / CCUG 17765 / NCTC 10094 / 16M).